An 845-amino-acid chain; its full sequence is Putative DEAD-box ATP-dependent RNA helicase 29 (845 aa).

The short motif at 28-56 (GGFESLNLGPNVFNAIKKKGYKVPTPIQR) is the Q motif element. A Helicase ATP-binding domain is found at 59–232 (MPLILSGVDV…KAGLREPQLV (174 aa)). Position 72-79 (72-79 (ARTGSGKT)) interacts with ATP. Positions 180-183 (DEAD) match the DEAD box motif. The Helicase C-terminal domain occupies 256 to 411 (KYSALLYLVR…EVLKNMEEVM (156 aa)). The interval 675–845 (SGKIKTESGA…GGGGKRGRGR (171 aa)) is disordered. Basic and acidic residues-rich tracts occupy residues 696 to 716 (RWQE…DETT) and 738 to 754 (VRSE…ERQQ). A compositionally biased stretch (gly residues) spans 770–799 (GGRGGARGGRGGGARGGRGGSRDFGGGGRD). The span at 806–817 (RGGRSGGRDFGG) shows a compositional bias: basic and acidic residues. Residues 828–845 (GGKRGGGRGGGGKRGRGR) show a composition bias toward basic residues.

This sequence belongs to the DEAD box helicase family. DDX54/DBP10 subfamily.

It catalyses the reaction ATP + H2O = ADP + phosphate + H(+). The sequence is that of Putative DEAD-box ATP-dependent RNA helicase 29 (RH29) from Arabidopsis thaliana (Mouse-ear cress).